The following is a 348-amino-acid chain: uncharacterized protein (348 aa).

The segment at 132-348 (SECRRSSDAL…QGTRRDSARL (217 aa)) is disordered. Residues 161–178 (STAPIPNAAISSARSSAR) are compositionally biased toward low complexity. Positions 192-207 (SRSSSETRSPGGTVQP) are enriched in polar residues. Residues 227–273 (AAGSLLPAPRPPASSASSPQAAAPAAPSATRLPRRTTPSAPRPSSRP) show a composition bias toward low complexity. Residues 274 to 287 (ARPPIPAARPPPRR) show a composition bias toward pro residues. Residues 288–310 (TPGTPRPAAARARAPAGCSPARR) are compositionally biased toward low complexity.

This is an uncharacterized protein from Streptomyces fradiae (Streptomyces roseoflavus).